A 510-amino-acid chain; its full sequence is Putative thymidine phosphorylase (510 aa).

It belongs to the thymidine/pyrimidine-nucleoside phosphorylase family. Type 2 subfamily.

It catalyses the reaction thymidine + phosphate = 2-deoxy-alpha-D-ribose 1-phosphate + thymine. The sequence is that of Putative thymidine phosphorylase from Nitrobacter hamburgensis (strain DSM 10229 / NCIMB 13809 / X14).